Reading from the N-terminus, the 225-residue chain is Peptidyl-prolyl cis-trans isomerase D (225 aa).

The first 22 residues, 1–22, serve as a signal peptide directing secretion; sequence MKLQFFSFITLFACLFTTAIFA. Positions 37–195 constitute a PPIase cyclophilin-type domain; the sequence is YFDINHGDKQ…KEVIIVESGE (159 aa). N139 carries an N-linked (GlcNAc...) asparagine glycan. The Prevents secretion from ER signature appears at 222-225; that stretch reads HDEL.

This sequence belongs to the cyclophilin-type PPIase family. PPIase B subfamily.

It is found in the endoplasmic reticulum lumen. It carries out the reaction [protein]-peptidylproline (omega=180) = [protein]-peptidylproline (omega=0). In terms of biological role, PPIases accelerate the folding of proteins. It catalyzes the cis-trans isomerization of proline imidic peptide bonds in oligopeptides. In Saccharomyces cerevisiae (strain ATCC 204508 / S288c) (Baker's yeast), this protein is Peptidyl-prolyl cis-trans isomerase D.